A 276-amino-acid polypeptide reads, in one-letter code: Diaminopimelate epimerase (276 aa).

Substrate-binding residues include asparagine 13, glutamine 46, and asparagine 66. Catalysis depends on cysteine 75, which acts as the Proton donor. Residues glycine 76–asparagine 77, asparagine 159, asparagine 192, and glutamate 210–arginine 211 each bind substrate. Catalysis depends on cysteine 219, which acts as the Proton acceptor. Substrate is bound at residue glycine 220–serine 221.

Belongs to the diaminopimelate epimerase family. In terms of assembly, homodimer.

Its subcellular location is the cytoplasm. The catalysed reaction is (2S,6S)-2,6-diaminopimelate = meso-2,6-diaminopimelate. The protein operates within amino-acid biosynthesis; L-lysine biosynthesis via DAP pathway; DL-2,6-diaminopimelate from LL-2,6-diaminopimelate: step 1/1. Its function is as follows. Catalyzes the stereoinversion of LL-2,6-diaminopimelate (L,L-DAP) to meso-diaminopimelate (meso-DAP), a precursor of L-lysine and an essential component of the bacterial peptidoglycan. The protein is Diaminopimelate epimerase of Vibrio vulnificus (strain CMCP6).